Consider the following 273-residue polypeptide: Dermonecrotic toxin LhSicTox-alphaIA2aii (273 aa).

The active site involves His5. Glu25 and Asp27 together coordinate Mg(2+). His41 functions as the Nucleophile in the catalytic mechanism. Cystine bridges form between Cys45-Cys51 and Cys47-Cys190. Asp85 contributes to the Mg(2+) binding site.

It belongs to the arthropod phospholipase D family. Class II subfamily. It depends on Mg(2+) as a cofactor. Expressed by the venom gland.

Its subcellular location is the secreted. It carries out the reaction an N-(acyl)-sphingosylphosphocholine = an N-(acyl)-sphingosyl-1,3-cyclic phosphate + choline. The catalysed reaction is an N-(acyl)-sphingosylphosphoethanolamine = an N-(acyl)-sphingosyl-1,3-cyclic phosphate + ethanolamine. The enzyme catalyses a 1-acyl-sn-glycero-3-phosphocholine = a 1-acyl-sn-glycero-2,3-cyclic phosphate + choline. It catalyses the reaction a 1-acyl-sn-glycero-3-phosphoethanolamine = a 1-acyl-sn-glycero-2,3-cyclic phosphate + ethanolamine. In terms of biological role, dermonecrotic toxins cleave the phosphodiester linkage between the phosphate and headgroup of certain phospholipids (sphingolipid and lysolipid substrates), forming an alcohol (often choline) and a cyclic phosphate. This toxin acts on sphingomyelin (SM). It may also act on ceramide phosphoethanolamine (CPE), lysophosphatidylcholine (LPC) and lysophosphatidylethanolamine (LPE), but not on lysophosphatidylserine (LPS), and lysophosphatidylglycerol (LPG). It acts by transphosphatidylation, releasing exclusively cyclic phosphate products as second products. Induces dermonecrosis, hemolysis, increased vascular permeability, edema, inflammatory response, and platelet aggregation. This Loxosceles hirsuta (Recluse spider) protein is Dermonecrotic toxin LhSicTox-alphaIA2aii.